A 468-amino-acid polypeptide reads, in one-letter code: Putative magnesium transporter MRS2-G (468 aa).

Disordered regions lie at residues 1 to 76 and 183 to 204; these read MGRR…AGKV and GQPGGDDHGEKHDDSHGDQVPR. 2 stretches are compositionally biased toward low complexity: residues 14–23 and 31–45; these read ASNASTSSST and RLPSLTRPRASSSPS. The span at 46-67 shows a compositional bias: pro residues; that stretch reads PASPSPPPPSASHPAPPSPPLA. Residues 187-201 are compositionally biased toward basic and acidic residues; sequence GDDHGEKHDDSHGDQ. 2 consecutive transmembrane segments (helical) span residues 402–422 and 437–457; these read LTLTIASFGIAVNTFIAGAFA and FFWPFVGGTSSGCFMICIVLL.

It belongs to the CorA metal ion transporter (MIT) (TC 1.A.35.5) family. Interacts with CYCB2-2.

The protein resides in the membrane. Its function is as follows. Putative magnesium transporter. This chain is Putative magnesium transporter MRS2-G (MRS2-G), found in Oryza sativa subsp. japonica (Rice).